Reading from the N-terminus, the 88-residue chain is Large ribosomal subunit protein bL27 (88 aa).

It belongs to the bacterial ribosomal protein bL27 family.

In Carboxydothermus hydrogenoformans (strain ATCC BAA-161 / DSM 6008 / Z-2901), this protein is Large ribosomal subunit protein bL27.